Here is a 117-residue protein sequence, read N- to C-terminus: Bomanin Bicipital 1 (117 aa).

The N-terminal stretch at 1 to 20 is a signal peptide; sequence MKCLILSFAIFVVLASQATA. 2 disulfide bridges follow: C29-C32 and C107-C110.

This sequence belongs to the bomanin family. As to expression, hemolymph (at protein level).

The protein localises to the secreted. Secreted immune-induced peptide induced by Toll signaling. Has a role in resistance to bacterial and fungal infections. This is Bomanin Bicipital 1 from Drosophila melanogaster (Fruit fly).